We begin with the raw amino-acid sequence, 631 residues long: Phosphomethylpyrimidine synthase (631 aa).

Substrate is bound by residues asparagine 239, methionine 268, tyrosine 297, histidine 333, 353-355, 394-397, and glutamate 433; these read SRG and DGLR. Histidine 437 contributes to the Zn(2+) binding site. Tyrosine 460 serves as a coordination point for substrate. Histidine 501 is a Zn(2+) binding site. Residues cysteine 581, cysteine 584, and cysteine 589 each coordinate [4Fe-4S] cluster.

It belongs to the ThiC family. In terms of assembly, homodimer. [4Fe-4S] cluster serves as cofactor.

The catalysed reaction is 5-amino-1-(5-phospho-beta-D-ribosyl)imidazole + S-adenosyl-L-methionine = 4-amino-2-methyl-5-(phosphooxymethyl)pyrimidine + CO + 5'-deoxyadenosine + formate + L-methionine + 3 H(+). It functions in the pathway cofactor biosynthesis; thiamine diphosphate biosynthesis. In terms of biological role, catalyzes the synthesis of the hydroxymethylpyrimidine phosphate (HMP-P) moiety of thiamine from aminoimidazole ribotide (AIR) in a radical S-adenosyl-L-methionine (SAM)-dependent reaction. The protein is Phosphomethylpyrimidine synthase of Escherichia coli O8 (strain IAI1).